We begin with the raw amino-acid sequence, 75 residues long: Microcin H47 (75 aa).

Residues 1-15 constitute a propeptide that is removed on maturation; it reads MREITESQLRYISGA. The chain crosses the membrane as a helical span at residues 30–50; it reads AIVGALAGIPGGPLGVVVGAV.

It localises to the secreted. The protein localises to the host cell membrane. In terms of biological role, bactericidal antibiotic. Active on bacteria phylogenetically related to the producing strain. In Escherichia coli O6:H1 (strain CFT073 / ATCC 700928 / UPEC), this protein is Microcin H47 (mchB).